A 325-amino-acid polypeptide reads, in one-letter code: Sulfite dehydrogenase subunit C (325 aa).

8 helical membrane passes run 5–25, 43–63, 87–107, 126–146, 165–185, 186–206, 266–286, and 290–310; these read FSVI…LAMV, FYAV…GASF, EVIV…AHWF, LLLG…TAMI, FLFL…AYIG, NPLV…GLAS, VYLV…YLIG, and LPII…WSFF.

This sequence belongs to the DmsC family. Forms a heterotrimeric membrane-bound complex composed of a catalytic heterodimer (SoeAB) and a membrane anchor protein (SoeC).

The protein resides in the cell inner membrane. Its function is as follows. Part of the SoeABC complex that catalyzes the oxidation of sulfite to sulfate. SoeC probably anchors and stabilizes the catalytic subunits. The sequence is that of Sulfite dehydrogenase subunit C from Allochromatium vinosum (strain ATCC 17899 / DSM 180 / NBRC 103801 / NCIMB 10441 / D) (Chromatium vinosum).